A 401-amino-acid chain; its full sequence is Mu-type opioid receptor (401 aa).

Topologically, residues 1 to 69 (MDSSAVPANA…CPPTGSPSMI (69 aa)) are extracellular. N-linked (GlcNAc...) asparagine glycans are attached at residues Asn9, Asn12, Asn34, Asn41, and Asn49. The chain crosses the membrane as a helical span at residues 70–94 (TAITIMALYSIVCVVGLFGNFLVMY). The Cytoplasmic segment spans residues 95–107 (VIVRYTKMKTATN). The helical transmembrane segment at 108–132 (IYIFNLALADALATSTLPFQSVNYL) threads the bilayer. At 133–143 (MGTWPFGTILC) the chain is on the extracellular side. A disulfide bridge links Cys143 with Cys220. Residues 144-166 (KIVISIDYYNMFTSIFTLCTMSV) form a helical membrane-spanning segment. Residues 167–186 (DRYIAVCHPVKALDFRTPRN) lie on the Cytoplasmic side of the membrane. Tyr169 bears the Phosphotyrosine mark. The chain crosses the membrane as a helical span at residues 187-208 (AKIINVCNWILSSAIGLPVMFM). The Extracellular segment spans residues 209–231 (ATTKYRHGSIDCTLTFSHPTWYW). The chain crosses the membrane as a helical span at residues 232-256 (ENLLKICVFIFAFIMPVLIITVCYG). At 257-280 (LMILRLKSVRMLSGSKEKDRNLRR) the chain is on the cytoplasmic side. Residues 281 to 307 (ITRMVLVVVAVFIVCWTPIHIYVIIKA) traverse the membrane as a helical segment. The Extracellular portion of the chain corresponds to 308–315 (LVTIPETT). A helical membrane pass occupies residues 316 to 339 (FQTVSWHFCIALGYTNSCLNPVLY). The NPxxY; plays a role in stabilizing the activated conformation of the receptor signature appears at 335–339 (NPVLY). Over 340–401 (AFLDENFKRC…NLEAETAPLP (62 aa)) the chain is Cytoplasmic. The S-palmitoyl cysteine moiety is linked to residue Cys354. The disordered stretch occupies residues 365–388 (NSTRIRQNTRDHPSTANTVDRTNH). Ser366 carries the phosphoserine modification. Thr373 is modified (phosphothreonine). Ser378 carries the phosphoserine modification. At Thr397 the chain carries Phosphothreonine.

The protein belongs to the G-protein coupled receptor 1 family. Forms homooligomers and heterooligomers with other GPCRs, such as OPRD1, OPRK1, OPRL1, NPFFR2, ADRA2A, SSTR2, CNR1 and CCR5 (probably in dimeric forms). Interacts with heterotrimeric G proteins; interaction with a heterotrimeric complex containing GNAI1, GNB1 and GNG2 stabilizes the active conformation of the receptor and increases its affinity for endomorphin-2, the synthetic opioid peptide DAMGO and for morphinan agonists. Interacts with PPL; the interaction disrupts agonist-mediated G-protein activation. Interacts (via C-terminus) with DNAJB4 (via C-terminus). Interacts with calmodulin; the interaction inhibits the constitutive activity of OPRM1; it abolishes basal and attenuates agonist-stimulated G-protein coupling. Interacts with FLNA, PLD2, RANBP9 and WLS and GPM6A. Interacts with RTP4. Interacts with SYP and GNAS. Interacts with RGS9, RGS17, RGS20, RGS4, PPP1R9B and HINT1. In terms of processing, phosphorylated. Differentially phosphorylated in basal and agonist-induced conditions. Agonist-mediated phosphorylation modulates receptor internalization. Phosphorylated by GRK2 in a agonist-dependent manner. Phosphorylation at Tyr-169 requires receptor activation, is dependent on non-receptor protein tyrosine kinase Src and results in a decrease in agonist efficacy by reducing G-protein coupling efficiency. Phosphorylated on tyrosine residues; the phosphorylation is involved in agonist-induced G-protein-independent receptor down-regulation. Phosphorylation at Ser-378 is involved in G-protein-dependent but not beta-arrestin-dependent activation of the ERK pathway. Ubiquitinated. A basal ubiquitination seems not to be related to degradation. Ubiquitination is increased upon formation of OPRM1:OPRD1 oligomers leading to proteasomal degradation; the ubiquitination is diminished by RTP4.

The protein resides in the cell membrane. Its subcellular location is the cell projection. The protein localises to the axon. It is found in the perikaryon. It localises to the dendrite. The protein resides in the endosome. Receptor for endogenous opioids such as beta-endorphin and endomorphin. Receptor for natural and synthetic opioids including morphine, heroin, DAMGO, fentanyl, etorphine, buprenorphin and methadone. Also activated by enkephalin peptides, such as Met-enkephalin or Met-enkephalin-Arg-Phe, with higher affinity for Met-enkephalin-Arg-Phe. Agonist binding to the receptor induces coupling to an inactive GDP-bound heterotrimeric G-protein complex and subsequent exchange of GDP for GTP in the G-protein alpha subunit leading to dissociation of the G-protein complex with the free GTP-bound G-protein alpha and the G-protein beta-gamma dimer activating downstream cellular effectors. The agonist- and cell type-specific activity is predominantly coupled to pertussis toxin-sensitive G(i) and G(o) G alpha proteins, GNAI1, GNAI2, GNAI3 and GNAO1, and to a lesser extent to pertussis toxin-insensitive G alpha proteins GNAZ and GNA15. They mediate an array of downstream cellular responses, including inhibition of adenylate cyclase activity and both N-type and L-type calcium channels, activation of inward rectifying potassium channels, mitogen-activated protein kinase (MAPK), phospholipase C (PLC), phosphoinositide/protein kinase (PKC), phosphoinositide 3-kinase (PI3K) and regulation of NF-kappa-B. Also couples to adenylate cyclase stimulatory G alpha proteins. The selective temporal coupling to G-proteins and subsequent signaling can be regulated by RGSZ proteins, such as RGS9, RGS17 and RGS4. Phosphorylation by members of the GPRK subfamily of Ser/Thr protein kinases and association with beta-arrestins is involved in short-term receptor desensitization. Beta-arrestins associate with the GPRK-phosphorylated receptor and uncouple it from the G-protein thus terminating signal transduction. The phosphorylated receptor is internalized through endocytosis via clathrin-coated pits which involves beta-arrestins. The activation of the ERK pathway occurs either in a G-protein-dependent or a beta-arrestin-dependent manner and is regulated by agonist-specific receptor phosphorylation. Acts as a class A G-protein coupled receptor (GPCR) which dissociates from beta-arrestin at or near the plasma membrane and undergoes rapid recycling. Receptor down-regulation pathways are varying with the agonist and occur dependent or independent of G-protein coupling. Endogenous ligands induce rapid desensitization, endocytosis and recycling. Heterooligomerization with other GPCRs can modulate agonist binding, signaling and trafficking properties. Involved in neurogenesis. In Pan troglodytes (Chimpanzee), this protein is Mu-type opioid receptor (OPRM1).